We begin with the raw amino-acid sequence, 175 residues long: ATP synthase subunit delta (175 aa).

The protein belongs to the ATPase delta chain family. In terms of assembly, F-type ATPases have 2 components, F(1) - the catalytic core - and F(0) - the membrane proton channel. F(1) has five subunits: alpha(3), beta(3), gamma(1), delta(1), epsilon(1). F(0) has three main subunits: a(1), b(2) and c(10-14). The alpha and beta chains form an alternating ring which encloses part of the gamma chain. F(1) is attached to F(0) by a central stalk formed by the gamma and epsilon chains, while a peripheral stalk is formed by the delta and b chains.

Its subcellular location is the cell inner membrane. F(1)F(0) ATP synthase produces ATP from ADP in the presence of a proton or sodium gradient. F-type ATPases consist of two structural domains, F(1) containing the extramembraneous catalytic core and F(0) containing the membrane proton channel, linked together by a central stalk and a peripheral stalk. During catalysis, ATP synthesis in the catalytic domain of F(1) is coupled via a rotary mechanism of the central stalk subunits to proton translocation. In terms of biological role, this protein is part of the stalk that links CF(0) to CF(1). It either transmits conformational changes from CF(0) to CF(1) or is implicated in proton conduction. This chain is ATP synthase subunit delta, found in Xanthomonas oryzae pv. oryzae (strain PXO99A).